The sequence spans 347 residues: Selenide, water dikinase (347 aa).

Residue selenocysteine 17 is part of the active site. A non-standard amino acid (selenocysteine) is located at residue selenocysteine 17. ATP is bound by residues lysine 20 and 48–50 (TAD). Residue aspartate 51 participates in Mg(2+) binding. ATP contacts are provided by residues aspartate 68, aspartate 91, and 139–141 (GHS). Mg(2+) is bound at residue aspartate 91. Aspartate 227 serves as a coordination point for Mg(2+).

It belongs to the selenophosphate synthase 1 family. Class I subfamily. As to quaternary structure, homodimer. The cofactor is Mg(2+).

It catalyses the reaction hydrogenselenide + ATP + H2O = selenophosphate + AMP + phosphate + 2 H(+). Functionally, synthesizes selenophosphate from selenide and ATP. This is Selenide, water dikinase from Haemophilus influenzae (strain 86-028NP).